The chain runs to 310 residues: Conjugation stage-specific protein (310 aa).

It belongs to the archaeal Rpo3/eukaryotic RPB3 RNA polymerase subunit family.

It localises to the nucleus. Functionally, may be a stage-specific RNA polymerase subunit. This is Conjugation stage-specific protein (CNJC) from Tetrahymena thermophila.